Reading from the N-terminus, the 423-residue chain is Glutamate-1-semialdehyde 2,1-aminomutase (423 aa).

Lys-263 bears the N6-(pyridoxal phosphate)lysine mark.

It belongs to the class-III pyridoxal-phosphate-dependent aminotransferase family. HemL subfamily. Requires pyridoxal 5'-phosphate as cofactor.

Its subcellular location is the cytoplasm. It carries out the reaction (S)-4-amino-5-oxopentanoate = 5-aminolevulinate. The protein operates within porphyrin-containing compound metabolism; protoporphyrin-IX biosynthesis; 5-aminolevulinate from L-glutamyl-tRNA(Glu): step 2/2. This chain is Glutamate-1-semialdehyde 2,1-aminomutase, found in Ignicoccus hospitalis (strain KIN4/I / DSM 18386 / JCM 14125).